The primary structure comprises 211 residues: MRVRKRKGAEEHLANNPHYVILNPEDAKGRWHDVFGNDRPIHIEVGSGKGGFITGMALKNPDINYIGIDIQLSVLSYALDKVLASEVSNVKLLRVDGSSLTNYFEDGEVDMMYLNFSDPWPKTKHEKRRLTYKDFLDTYKRILPEHGEIHFKTDNRGLFEYSLASFSQYGMTLRQIWLDLHASNYEGNVMTEYEEKFSNKGQVIYRVEANF.

S-adenosyl-L-methionine is bound by residues E44, D69, D96, and D118. D118 is an active-site residue. A substrate-binding site is contributed by K122. Positions 124–129 (KHEKRR) are interaction with RNA. Substrate-binding positions include D154 and 191–194 (TEYE).

It belongs to the class I-like SAM-binding methyltransferase superfamily. TrmB family.

The enzyme catalyses guanosine(46) in tRNA + S-adenosyl-L-methionine = N(7)-methylguanosine(46) in tRNA + S-adenosyl-L-homocysteine. The protein operates within tRNA modification; N(7)-methylguanine-tRNA biosynthesis. Catalyzes the formation of N(7)-methylguanine at position 46 (m7G46) in tRNA. The chain is tRNA (guanine-N(7)-)-methyltransferase from Streptococcus pyogenes serotype M6 (strain ATCC BAA-946 / MGAS10394).